Consider the following 761-residue polypeptide: Ribonucleoside-diphosphate reductase subunit alpha (761 aa).

An ATP-cone domain is found at 5 to 95 (LFVTKRDGRK…IFHLRKKAYG (91 aa)). Residues K9, 15–21 (EKINLDK), T55, and K91 contribute to the ATP site. T209 contacts GDP. A disulfide bond links C225 and C462. Residues 232–234 (DSL), R262, and R269 contribute to the dTTP site. N437 lines the GDP pocket. The active-site Proton acceptor is N437. Catalysis depends on C439, which acts as the Cysteine radical intermediate. Residues E441 and 623–625 (ETS) contribute to the GDP site. The Proton acceptor role is filled by E441.

This sequence belongs to the ribonucleoside diphosphate reductase large chain family. Tetramer of two alpha and two beta subunits.

The catalysed reaction is a 2'-deoxyribonucleoside 5'-diphosphate + [thioredoxin]-disulfide + H2O = a ribonucleoside 5'-diphosphate + [thioredoxin]-dithiol. Its activity is regulated as follows. Under complex allosteric control mediated by deoxynucleoside triphosphates and ATP binding to separate specificity and activation sites on the alpha subunit. The type of nucleotide bound at the specificity site determines substrate preference. It seems probable that ATP makes the enzyme reduce CDP and UDP, dGTP favors ADP reduction and dTTP favors GDP reduction. Stimulated by ATP and inhibited by dATP binding to the activity site. In terms of biological role, provides the precursors necessary for DNA synthesis. Catalyzes the biosynthesis of deoxyribonucleotides from the corresponding ribonucleotides. In Buchnera aphidicola subsp. Acyrthosiphon pisum (strain APS) (Acyrthosiphon pisum symbiotic bacterium), this protein is Ribonucleoside-diphosphate reductase subunit alpha (nrdA).